The sequence spans 270 residues: Formamidopyrimidine-DNA glycosylase (270 aa).

Catalysis depends on P2, which acts as the Schiff-base intermediate with DNA. Catalysis depends on E3, which acts as the Proton donor. K58 acts as the Proton donor; for beta-elimination activity in catalysis. H91, R110, and K151 together coordinate DNA. The FPG-type zinc finger occupies 236 to 270 (FVYGRGGEACKVCGTELRNVVLGQRASVFCPRCQR). R260 serves as the catalytic Proton donor; for delta-elimination activity.

This sequence belongs to the FPG family. In terms of assembly, monomer. Requires Zn(2+) as cofactor.

It carries out the reaction Hydrolysis of DNA containing ring-opened 7-methylguanine residues, releasing 2,6-diamino-4-hydroxy-5-(N-methyl)formamidopyrimidine.. It catalyses the reaction 2'-deoxyribonucleotide-(2'-deoxyribose 5'-phosphate)-2'-deoxyribonucleotide-DNA = a 3'-end 2'-deoxyribonucleotide-(2,3-dehydro-2,3-deoxyribose 5'-phosphate)-DNA + a 5'-end 5'-phospho-2'-deoxyribonucleoside-DNA + H(+). Its function is as follows. Involved in base excision repair of DNA damaged by oxidation or by mutagenic agents. Acts as a DNA glycosylase that recognizes and removes damaged bases. Has a preference for oxidized purines, such as 7,8-dihydro-8-oxoguanine (8-oxoG). Has AP (apurinic/apyrimidinic) lyase activity and introduces nicks in the DNA strand. Cleaves the DNA backbone by beta-delta elimination to generate a single-strand break at the site of the removed base with both 3'- and 5'-phosphates. In Pseudomonas fluorescens (strain SBW25), this protein is Formamidopyrimidine-DNA glycosylase.